The primary structure comprises 273 residues: MASHKEIVSSFVEGAPPGELADVVADIKALTSSTPNLLNELGPAFQKYNEEQFTTVKLPGGSQPVIISSHSSLEDGRYYDVESSSSFAYDHITQKASDVQSHVLEGEQTDLVKSTVKGLSAYVKEHFPNAAYGAYPIENDTKVAVVIVANKYSPNNFWNGRWRSLYIYDPSNNSIEGSIKVDVHYYEDGNVRLLTNKTVTATVSSGTGSGIAKEISVNEKKYQEELNKSFTSLSEGAFKGLRRQLPVTRQKIEWDKVASYRLGQDIGGGSSRR.

It belongs to the F-actin-capping protein alpha subunit family. Component of the F-actin capping complex, composed of a heterodimer of an alpha and a beta subunit.

It is found in the cytoplasm. The protein localises to the cytoskeleton. It localises to the actin patch. Functionally, F-actin-capping proteins bind in a Ca(2+)-independent manner to the fast growing ends of actin filaments (barbed end) thereby blocking the exchange of subunits at these ends. Unlike other capping proteins (such as gelsolin and severin), these proteins do not sever actin filaments. The polypeptide is F-actin-capping protein subunit alpha (fac-1) (Neurospora crassa (strain ATCC 24698 / 74-OR23-1A / CBS 708.71 / DSM 1257 / FGSC 987)).